The chain runs to 107 residues: Nucleoid-associated protein Hhal_0231 (107 aa).

Disordered regions lie at residues 1–24 (MKGGLGNIMKQAQKMQEDMQKAQE) and 82–107 (VQRESQERMSGMAEGMGLPPGMKLPF). The span at 15-24 (MQEDMQKAQE) shows a compositional bias: basic and acidic residues.

The protein belongs to the YbaB/EbfC family. In terms of assembly, homodimer.

The protein localises to the cytoplasm. It is found in the nucleoid. In terms of biological role, binds to DNA and alters its conformation. May be involved in regulation of gene expression, nucleoid organization and DNA protection. This chain is Nucleoid-associated protein Hhal_0231, found in Halorhodospira halophila (strain DSM 244 / SL1) (Ectothiorhodospira halophila (strain DSM 244 / SL1)).